The sequence spans 435 residues: Glutamyl-tRNA reductase (435 aa).

Substrate is bound by residues 49 to 52, serine 109, 114 to 116, and glutamine 120; these read TCNR and EGQ. Cysteine 50 acts as the Nucleophile in catalysis. 198–203 is an NADP(+) binding site; the sequence is GAGRMS.

It belongs to the glutamyl-tRNA reductase family. Homodimer.

It carries out the reaction (S)-4-amino-5-oxopentanoate + tRNA(Glu) + NADP(+) = L-glutamyl-tRNA(Glu) + NADPH + H(+). Its pathway is porphyrin-containing compound metabolism; protoporphyrin-IX biosynthesis; 5-aminolevulinate from L-glutamyl-tRNA(Glu): step 1/2. It participates in porphyrin-containing compound metabolism; chlorophyll biosynthesis. Its function is as follows. Catalyzes the NADPH-dependent reduction of glutamyl-tRNA(Glu) to glutamate 1-semialdehyde (GSA). The polypeptide is Glutamyl-tRNA reductase (Prochlorococcus marinus (strain MIT 9515)).